Reading from the N-terminus, the 404-residue chain is Cysteine desulfurase IscS (404 aa).

Residues 75-76 (AT), Asn155, Gln183, and 203-205 (SGH) each bind pyridoxal 5'-phosphate. Lys206 carries the post-translational modification N6-(pyridoxal phosphate)lysine. Residue Thr243 coordinates pyridoxal 5'-phosphate. The Cysteine persulfide intermediate role is filled by Cys328. A [2Fe-2S] cluster-binding site is contributed by Cys328.

The protein belongs to the class-V pyridoxal-phosphate-dependent aminotransferase family. NifS/IscS subfamily. In terms of assembly, homodimer. Forms a heterotetramer with IscU, interacts with other sulfur acceptors. Requires pyridoxal 5'-phosphate as cofactor.

It is found in the cytoplasm. The catalysed reaction is (sulfur carrier)-H + L-cysteine = (sulfur carrier)-SH + L-alanine. Its pathway is cofactor biosynthesis; iron-sulfur cluster biosynthesis. Master enzyme that delivers sulfur to a number of partners involved in Fe-S cluster assembly, tRNA modification or cofactor biosynthesis. Catalyzes the removal of elemental sulfur atoms from cysteine to produce alanine. Functions as a sulfur delivery protein for Fe-S cluster synthesis onto IscU, an Fe-S scaffold assembly protein, as well as other S acceptor proteins. This chain is Cysteine desulfurase IscS, found in Shewanella amazonensis (strain ATCC BAA-1098 / SB2B).